The chain runs to 513 residues: ATP synthase subunit alpha (513 aa).

171 to 178 (GDRQIGKT) is a binding site for ATP.

It belongs to the ATPase alpha/beta chains family. As to quaternary structure, F-type ATPases have 2 components, CF(1) - the catalytic core - and CF(0) - the membrane proton channel. CF(1) has five subunits: alpha(3), beta(3), gamma(1), delta(1), epsilon(1). CF(0) has three main subunits: a(1), b(2) and c(9-12). The alpha and beta chains form an alternating ring which encloses part of the gamma chain. CF(1) is attached to CF(0) by a central stalk formed by the gamma and epsilon chains, while a peripheral stalk is formed by the delta and b chains.

It is found in the cell membrane. The catalysed reaction is ATP + H2O + 4 H(+)(in) = ADP + phosphate + 5 H(+)(out). In terms of biological role, produces ATP from ADP in the presence of a proton gradient across the membrane. The alpha chain is a regulatory subunit. This chain is ATP synthase subunit alpha, found in Wolbachia pipientis subsp. Culex pipiens (strain wPip).